The primary structure comprises 151 residues: Putative transcriptional regulatory protein TK2151 (151 aa).

It belongs to the Tfx family.

In terms of biological role, putative transcriptional regulator. The chain is Putative transcriptional regulatory protein TK2151 from Thermococcus kodakarensis (strain ATCC BAA-918 / JCM 12380 / KOD1) (Pyrococcus kodakaraensis (strain KOD1)).